Consider the following 524-residue polypeptide: Probable lipid II flippase MurJ (524 aa).

Helical transmembrane passes span 44-64, 103-123, 146-166, 172-192, 195-215, 250-270, 284-304, 322-342, 367-387, 396-416, 420-440, 456-476, and 494-514; these read IFGAGMATDAFFVAFKLPNLL, LLTLALAVVTVAGMLAAPWVI, ITFPYILLISLASLVGAILNT, IPAFAPTFLNISMIGFALFAA, FNPPVLALAWAVTVGGVLQLV, ILGVSVSQISLIINTIFASFL, LMEFPSGVLGVALGTILLPSL, WGLRLCFLLALPSAVALGILA, LIAYSVGLIGLIVVKVLAPGF, PVKIAIVTLIMTQLMNLAFIG, HAGLSLSIGLAACLNASLLYW, WFLMRLIISVLVMAAVLFGVL, and LMAVVIAGIAAYFAALAVLGF.

The protein belongs to the MurJ/MviN family.

The protein resides in the cell inner membrane. It functions in the pathway cell wall biogenesis; peptidoglycan biosynthesis. In terms of biological role, involved in peptidoglycan biosynthesis. Transports lipid-linked peptidoglycan precursors from the inner to the outer leaflet of the cytoplasmic membrane. The polypeptide is Probable lipid II flippase MurJ (Salmonella typhimurium (strain LT2 / SGSC1412 / ATCC 700720)).